Consider the following 98-residue polypeptide: Acylphosphatase (98 aa).

The Acylphosphatase-like domain maps to 12-98 (TYYVRVRGVV…DKRFERFQQH (87 aa)). Active-site residues include arginine 27 and asparagine 45.

This sequence belongs to the acylphosphatase family.

It carries out the reaction an acyl phosphate + H2O = a carboxylate + phosphate + H(+). The protein is Acylphosphatase (acyP) of Burkholderia thailandensis (strain ATCC 700388 / DSM 13276 / CCUG 48851 / CIP 106301 / E264).